The primary structure comprises 375 residues: Flagellar P-ring protein (375 aa).

Positions Met1–Ala23 are cleaved as a signal peptide.

It belongs to the FlgI family. As to quaternary structure, the basal body constitutes a major portion of the flagellar organelle and consists of four rings (L,P,S, and M) mounted on a central rod.

Its subcellular location is the bacterial flagellum basal body. Its function is as follows. Assembles around the rod to form the L-ring and probably protects the motor/basal body from shearing forces during rotation. The polypeptide is Flagellar P-ring protein (Buchnera aphidicola subsp. Baizongia pistaciae (strain Bp)).